Consider the following 201-residue polypeptide: Prostamide/prostaglandin F synthase (201 aa).

It belongs to the peroxiredoxin-like PRXL2 family. Prostamide/prostaglandin F synthase subfamily.

It is found in the cytoplasm. Its subcellular location is the cytosol. The enzyme catalyses prostaglandin H2 + [thioredoxin]-dithiol = prostaglandin F2alpha + [thioredoxin]-disulfide. It carries out the reaction prostamide F2alpha + [thioredoxin]-disulfide = prostamide H2 + [thioredoxin]-dithiol. Functionally, catalyzes the reduction of prostaglandin-ethanolamide H(2) (prostamide H(2)) to prostamide F(2alpha) with NADPH as proton donor. Also able to reduce prostaglandin H(2) to prostaglandin F(2alpha). The protein is Prostamide/prostaglandin F synthase (prxl2b) of Danio rerio (Zebrafish).